Here is a 732-residue protein sequence, read N- to C-terminus: Polyribonucleotide nucleotidyltransferase (732 aa).

2 residues coordinate Mg(2+): Asp502 and Asp508. One can recognise a KH domain in the interval 569–628 (PRLTSIQIPVDAIGMVIGKGGETIRSITEETGAEINIDDDGTVTIACSSPEGTKAAVETI). The region spanning 638–712 (GTIYMGKVRD…GKTKFALSIK (75 aa)) is the S1 motif domain.

Belongs to the polyribonucleotide nucleotidyltransferase family. Requires Mg(2+) as cofactor.

It localises to the cytoplasm. It catalyses the reaction RNA(n+1) + phosphate = RNA(n) + a ribonucleoside 5'-diphosphate. Functionally, involved in mRNA degradation. Catalyzes the phosphorolysis of single-stranded polyribonucleotides processively in the 3'- to 5'-direction. The chain is Polyribonucleotide nucleotidyltransferase from Chlorobaculum parvum (strain DSM 263 / NCIMB 8327) (Chlorobium vibrioforme subsp. thiosulfatophilum).